The chain runs to 112 residues: uncharacterized protein (112 aa).

Transmembrane regions (helical) follow at residues 33–53 (PSPLLLSLLLHYTVLFSPFGA), 58–78 (LYIYIYIYIYIYIYMCINVCT), and 91–111 (CVYVCTHFNIYIHTYIYLLFV).

It is found in the membrane. This is an uncharacterized protein from Saccharomyces cerevisiae (strain ATCC 204508 / S288c) (Baker's yeast).